The following is a 611-amino-acid chain: Ankyrin repeat protein SKIP35 (611 aa).

6 ANK repeats span residues 292-322 (LFSNSFDPGWASGMSATVIQGLLGMLVEGGA), 323-353 (DNVNQCFLEASRFGSTELVRVLLQIAQRNSL), 356-384 (DVDLALGFASHYCKIGTMKCLVEEGNAIA), 385-414 (FLGPLMRAAERGCMQVVQWFVKRGCRDMEL), 416-442 (LALTAATSSCQVEVAAYLLPRVPPPVL), and 445-478 (LSIEILKAAGERSGGSLQGVEFLLKSDFLGDSTA).

In terms of assembly, interacts with SKP1A/ASK1.

The protein is Ankyrin repeat protein SKIP35 (SKIP35) of Arabidopsis thaliana (Mouse-ear cress).